We begin with the raw amino-acid sequence, 372 residues long: MAKRDYYEVLGVSKTASEKEIKKAYKRLAMKYHPDRNQGDKEAESQFKEVKEAYEILTDDQKRAAYDQYGHAAFEQGGMGGGGADFSDIFGDVFGDIFGGGRRQQRPSRGADLRYSMELTLEEAVRGVTKEIRIPTLETCDICHGSGAKAGTSPVTCSTCQGAGQVHMRQGFFTVQQPCPHCHGRGQIIKDSCHKCHGHGRVERYKTLSVKIPAGVDTGDRVRLSGEGEAGAKGAPAGDLYVQVQVKSHHIFERQESNLYCEVPVNFAMAALGGEIEVPTLDGRVKLKIPAETQTGKMFRMKGKGVKSVRGGVQGDLLCRVVVETPVKLNERQKELLRELGESFGGAGEETNSPRSKSFFDGVKKFFDDLTK.

The 66-residue stretch at 5–70 folds into the J domain; that stretch reads DYYEVLGVSK…QKRAAYDQYG (66 aa). A CR-type zinc finger spans residues 127–205; that stretch reads GVTKEIRIPT…CHGHGRVERY (79 aa). Positions 140, 143, 157, 160, 179, 182, 193, and 196 each coordinate Zn(2+). 4 CXXCXGXG motif repeats span residues 140 to 147, 157 to 164, 179 to 186, and 193 to 200; these read CDICHGSG, CSTCQGAG, CPHCHGRG, and CHKCHGHG.

This sequence belongs to the DnaJ family. Homodimer. Requires Zn(2+) as cofactor.

Its subcellular location is the cytoplasm. In terms of biological role, participates actively in the response to hyperosmotic and heat shock by preventing the aggregation of stress-denatured proteins and by disaggregating proteins, also in an autonomous, DnaK-independent fashion. Unfolded proteins bind initially to DnaJ; upon interaction with the DnaJ-bound protein, DnaK hydrolyzes its bound ATP, resulting in the formation of a stable complex. GrpE releases ADP from DnaK; ATP binding to DnaK triggers the release of the substrate protein, thus completing the reaction cycle. Several rounds of ATP-dependent interactions between DnaJ, DnaK and GrpE are required for fully efficient folding. Also involved, together with DnaK and GrpE, in the DNA replication of plasmids through activation of initiation proteins. In Photorhabdus laumondii subsp. laumondii (strain DSM 15139 / CIP 105565 / TT01) (Photorhabdus luminescens subsp. laumondii), this protein is Chaperone protein DnaJ.